A 229-amino-acid chain; its full sequence is Heptaprenylglyceryl phosphate synthase (229 aa).

Sn-glycerol 1-phosphate is bound at residue Lys-12. Mg(2+)-binding residues include Asp-14 and Ser-40. Residues 159–164 (YLEYSG), Gly-189, and 209–210 (GN) contribute to the sn-glycerol 1-phosphate site.

Belongs to the GGGP/HepGP synthase family. Group I subfamily. In terms of assembly, homodimer. Mg(2+) serves as cofactor.

It carries out the reaction sn-glycerol 1-phosphate + all-trans-heptaprenyl diphosphate = 3-heptaprenyl-sn-glycero-1-phosphate + diphosphate. It functions in the pathway membrane lipid metabolism; glycerophospholipid metabolism. In terms of biological role, prenyltransferase that catalyzes in vivo the transfer of the heptaprenyl moiety of heptaprenyl pyrophosphate (HepPP; 35 carbon atoms) to the C3 hydroxyl of sn-glycerol-1-phosphate (G1P), producing heptaprenylglyceryl phosphate (HepGP). This reaction is an ether-bond-formation step in the biosynthesis of archaea-type G1P-based membrane lipids found in Bacillales. The chain is Heptaprenylglyceryl phosphate synthase from Bacillus cereus (strain G9842).